A 142-amino-acid polypeptide reads, in one-letter code: Small heat shock protein IbpB (142 aa).

Residues 26–137 form the sHSP domain; that stretch reads AGESQSFPPY…APQRIAISER (112 aa).

The protein belongs to the small heat shock protein (HSP20) family. As to quaternary structure, homodimer. Forms homomultimers of about 100-150 subunits at optimal growth temperatures. Conformation changes to oligomers at high temperatures or high ionic concentrations. The decrease in size of the multimers is accompanied by an increase in chaperone activity.

The protein resides in the cytoplasm. Its function is as follows. Associates with aggregated proteins, together with IbpA, to stabilize and protect them from irreversible denaturation and extensive proteolysis during heat shock and oxidative stress. Aggregated proteins bound to the IbpAB complex are more efficiently refolded and reactivated by the ATP-dependent chaperone systems ClpB and DnaK/DnaJ/GrpE. Its activity is ATP-independent. This is Small heat shock protein IbpB from Klebsiella pneumoniae (strain 342).